The sequence spans 185 residues: Kunitz-type serine protease inhibitor DrTI (185 aa).

Cystine bridges form between C44-C89 and C139-C147.

It belongs to the protease inhibitor I3 (leguminous Kunitz-type inhibitor) family.

It is found in the secreted. Its function is as follows. Inhibits bovine trypsin and human plasma kallikrein. This is Kunitz-type serine protease inhibitor DrTI from Delonix regia (Royal poinciana).